A 59-amino-acid polypeptide reads, in one-letter code: Ribosome modulation factor (59 aa).

It belongs to the ribosome modulation factor family.

The protein localises to the cytoplasm. In terms of biological role, during stationary phase, converts 70S ribosomes to an inactive dimeric form (100S ribosomes). The polypeptide is Ribosome modulation factor (Aeromonas veronii (strain B565)).